The sequence spans 254 residues: Protein Thf1 (254 aa).

A coiled-coil region spans residues 183 to 217 (SDKLQKDLDLYRSNLEKMEQARITMEEAIQADRRK). Positions 213 to 227 (ADRRKREQREQEKLA) are enriched in basic and acidic residues. A disordered region spans residues 213 to 254 (ADRRKREQREQEKLAKAAAAEAPAALEASSDNPEPETSETPS). The segment covering 228–240 (KAAAAEAPAALEA) has biased composition (low complexity). Over residues 245 to 254 (PEPETSETPS) the composition is skewed to acidic residues.

The protein belongs to the THF1 family.

In terms of biological role, may be involved in photosynthetic membrane biogenesis. The polypeptide is Protein Thf1 (Synechococcus elongatus (strain ATCC 33912 / PCC 7942 / FACHB-805) (Anacystis nidulans R2)).